The primary structure comprises 208 residues: uncharacterized protein (208 aa).

The next 6 helical transmembrane spans lie at 5–25 (VIGI…KEAW), 41–61 (MLLI…IAAL), 69–89 (ANGI…LFFL), 123–143 (VLLG…ICGL), 150–170 (VFFF…TIAG), and 176–196 (NKLL…LVIY).

It localises to the cell membrane. This is an uncharacterized protein from Bacillus subtilis (strain 168).